The sequence spans 118 residues: UPF0102 protein NE0711 (118 aa).

This sequence belongs to the UPF0102 family.

The sequence is that of UPF0102 protein NE0711 from Nitrosomonas europaea (strain ATCC 19718 / CIP 103999 / KCTC 2705 / NBRC 14298).